The chain runs to 441 residues: tRNA-2-methylthio-N(6)-dimethylallyladenosine synthase (441 aa).

The MTTase N-terminal domain occupies 5–120 (KLLYIETFGC…LPEMVRAAEQ (116 aa)). The [4Fe-4S] cluster site is built by Cys14, Cys50, Cys83, Cys158, Cys162, and Cys165. The region spanning 144–374 (EGGGVTRFVT…QGLQRDMTIE (231 aa)) is the Radical SAM core domain. A TRAM domain is found at 377–439 (AGFVGTCQAV…PNSLLGELAV (63 aa)).

Belongs to the methylthiotransferase family. MiaB subfamily. As to quaternary structure, monomer. The cofactor is [4Fe-4S] cluster.

It localises to the cytoplasm. The catalysed reaction is N(6)-dimethylallyladenosine(37) in tRNA + (sulfur carrier)-SH + AH2 + 2 S-adenosyl-L-methionine = 2-methylsulfanyl-N(6)-dimethylallyladenosine(37) in tRNA + (sulfur carrier)-H + 5'-deoxyadenosine + L-methionine + A + S-adenosyl-L-homocysteine + 2 H(+). Functionally, catalyzes the methylthiolation of N6-(dimethylallyl)adenosine (i(6)A), leading to the formation of 2-methylthio-N6-(dimethylallyl)adenosine (ms(2)i(6)A) at position 37 in tRNAs that read codons beginning with uridine. The chain is tRNA-2-methylthio-N(6)-dimethylallyladenosine synthase from Geobacter metallireducens (strain ATCC 53774 / DSM 7210 / GS-15).